The chain runs to 1392 residues: MSPHNFEFHLPLSPEELLKSGGVNQYVVREVLPVKHLSSQLRAFQSAFRAQGPLAILEHFDTVYSILHHFRSIEPGLKEDTLEFLKKVVSRHSQELSSILDDAALSGSDRSAHLNALKMNCYALIRLLESFENMTSQTSLIDLDIGGKGKRARAKATLGFDWEEERQPVLQLLTQLLQLDIRHLWNHSAIEEEFVSLVTGCCYRLLENPTISHQKNRSTKEAIAHLLGVALVRYNHMLSATVKIIQMLQHFEHLPPVLVTAVSLWATDYGMKSIVGEIVREIGQKCPQELSRDTAGAKGFAAFLTELAERIPAVLMANMCILLDHLDGENYMMRNAVLAAIAEMVLQVLNGDQLEESARETRDQFLDILQAHGHDVNSFVRSRVLQLFARIVQQKALPLTRFQAVVALAVGRLADKSVLVCKNAIQLLASFLANNPFSCKLSDIDLAGPLQKEIQKLQEMRAQRRSAAATAALDPEEEWDAMLPELKSTLQQLLKLPQEEGDHQIADAETAEEVKGRIRQLLAKASYKQAIVLTREATSHFQESEPFSHTEPEENSFLNLLGLIFKGPEASTQDSHGDTDPGLTGSKDSPSVPEPEGSQSNDELVKQEMLVQYLQDAYGFSQKITEAIGIISKMMYENTTTVVQEVIEFFVMVFQFGVPQALFGVRRMLPLIWSKEPGVREAVLNAYRQLYLNPKGDSARAKAQTLIHNLSLLLVDASVGTIQCLEEILCEFVQKDEVKPAVIQLLWERATEKVPSSPLERCSSVMLLGMMARGKPEIVGSNLDALVRVGLDEKSPQDYRLAQQVCLAIANISDRRKPSLGERHPPFRLPQEHRLFERLQDMVTKGFAHPDPLWIPFKEVAVTLTYQLAESPDVLCAQMLQGCAKQVLEKLEKNATEADPKETAPRLPTFLLMNLLSLAGDVALQQLVHLEQAVSGELGRRRVLREEQEHRAKEPKEKTASSETTMEEELGLVGGATADDTEAELIRSICEKELLDGNQVLAAFVPLLLKVCNNPGLYSNPELCAAASLALGKFCMISAPFCDSQLRLLFTMLEKSSLPTVRSNLMVATGDLAIRFPNLVDPWTPHLYARLRDPAQQVRKTAGLVMTHLILKDMVKVKGQVSEMAVLLIDPVPQIAALAKNFFNELSHKGNAIYNLLPDIISRLSDPEGGVEEEPFHTIMKQLLSYITKDKQTESLVEKLCQRFRTARTERQYRDLAYCMSQLPLTERGLQKMLDNFECFGDKLLDESVFSAFLSIVGKLRRGAKPEGKAIIDEFEQKLRACHTRGMDGIEEFETGQGGSQRALSAKKPSAVSRLQPLTSVDSDNDFVTPKPRRTKPGRPQTQQRKKSQRKAKVVFLSDESSEDELSAEMTEEETPKRTTPIRRASGRRHRS.

The tract at residues 1 to 593 (MSPHNFEFHL…TGSKDSPSVP (593 aa)) is interaction with SMC2 and SMC4. Residues Ser20 and Ser575 each carry the phosphoserine modification. 3 disordered regions span residues 569-602 (EASTQDSHGDTDPGLTGSKDSPSVPEPEGSQSND), 945-966 (REEQEHRAKEPKEKTASSETTM), and 1293-1392 (FETG…RHRS). Over residues 945–960 (REEQEHRAKEPKEKTA) the composition is skewed to basic and acidic residues. Residues Ser1300, Ser1305, Ser1320, and Ser1323 each carry the phosphoserine modification. A Phosphothreonine modification is found at Thr1329. A Bipartite nuclear localization signal motif is present at residues 1332–1353 (PRRTKPGRPQTQQRKKSQRKAK). A compositionally biased stretch (basic residues) spans 1344–1353 (QRKKSQRKAK). Residues Ser1358, Ser1361, Ser1362, and Ser1367 each carry the phosphoserine modification. A compositionally biased stretch (acidic residues) spans 1360–1373 (ESSEDELSAEMTEE). Phosphothreonine; by CDK1 occurs at positions 1375 and 1380. Position 1386 is a phosphoserine (Ser1386).

Belongs to the CND1 (condensin subunit 1) family. Component of the condensin complex, which contains the SMC2 and SMC4 heterodimer, and three non SMC subunits that probably regulate the complex: NCAPH/BRRN1, NCAPD2/CAPD2 and NCAPG. Interacts with histones H1 and H3. Post-translationally, phosphorylated by CDK1. Its phosphorylation, as well as that of NCAPH and NCAPG subunits, activates the condensin complex and is required for chromosome condensation.

It localises to the nucleus. Its subcellular location is the cytoplasm. It is found in the chromosome. Its function is as follows. Regulatory subunit of the condensin complex, a complex required for conversion of interphase chromatin into mitotic-like condense chromosomes. The condensin complex probably introduces positive supercoils into relaxed DNA in the presence of type I topoisomerases and converts nicked DNA into positive knotted forms in the presence of type II topoisomerases. May target the condensin complex to DNA via its C-terminal domain. May promote the resolution of double-strand DNA catenanes (intertwines) between sister chromatids. Condensin-mediated compaction likely increases tension in catenated sister chromatids, providing directionality for type II topoisomerase-mediated strand exchanges toward chromatid decatenation. Required for decatenation of non-centromeric ultrafine DNA bridges during anaphase. Early in neurogenesis, may play an essential role to ensure accurate mitotic chromosome condensation in neuron stem cells, ultimately affecting neuron pool and cortex size. The chain is Condensin complex subunit 1 (Ncapd2) from Mus musculus (Mouse).